We begin with the raw amino-acid sequence, 348 residues long: Nuclear receptor subfamily 1 group I member 3 (348 aa).

A DNA-binding region (nuclear receptor) is located at residues 8 to 83 (PRSCMVCGDR…AGMKKEMILS (76 aa)). The segment at 11–31 (CMVCGDRATGYHFHALTCEGC) adopts an NR C4-type zinc-finger fold. T38 is modified (phosphothreonine; by PKC). The segment at 47–71 (CPFAGSCKVNKAQRRHCPACRLQKC) adopts an NR C4-type zinc-finger fold. Residues 109–348 (GQQELVQTLL…MMPLLQEICS (240 aa)) form the NR LBD domain.

It belongs to the nuclear hormone receptor family. NR1 subfamily. As to quaternary structure, heterodimer of NR1I3 and RXR. Interacts with PSMC4. Interacts with ECT2. Directly interacts with DNAJC7; this complex may also include HSP90. Interacts with CRY1. Interacts with CRY2 in a ligand-dependent manner. In terms of processing, phosphorylated at Thr-38 by PKC, dephosphorylation of Thr-38 is required for nuclear translocation and activation.

The protein resides in the nucleus. Its subcellular location is the cytoplasm. It localises to the cytoskeleton. Its function is as follows. Binds and transactivates the retinoic acid response elements that control expression of the retinoic acid receptor beta 2 and alcohol dehydrogenase 3 genes. Transactivates both the phenobarbital responsive element module of the human CYP2B6 gene and the CYP3A4 xenobiotic response element. In Pusa sibirica (Baikal seal), this protein is Nuclear receptor subfamily 1 group I member 3 (NR1I3).